We begin with the raw amino-acid sequence, 652 residues long: Putative asparagine synthetase [glutamine-hydrolyzing] (652 aa).

The active-site For GATase activity is Cys-2. The Glutamine amidotransferase type-2 domain occupies 2–231 (CGLLAFVAAP…SGCFARIRAD (230 aa)). L-glutamine is bound by residues 60–64 (RLSII), 89–91 (NGE), and Asp-115. 382–383 (SG) serves as a coordination point for ATP.

Belongs to the asparagine synthetase family.

The enzyme catalyses L-aspartate + L-glutamine + ATP + H2O = L-asparagine + L-glutamate + AMP + diphosphate + H(+). The protein operates within amino-acid biosynthesis; L-asparagine biosynthesis; L-asparagine from L-aspartate (L-Gln route): step 1/1. This chain is Putative asparagine synthetase [glutamine-hydrolyzing] (asnB), found in Mycobacterium bovis (strain ATCC BAA-935 / AF2122/97).